The sequence spans 757 residues: MDVNPTLLFLKVPAQNAISTTFPYTGDPPYSHGTGTGYTMDTVNRTHQYSEKGKWTTNTETGAPQLNPIDGPLPEDNEPSGYAQTDCVLEAMAFLEKSHPGIFENSCLETMEIVQQTRVDKLTQGRQTYDWTLNRNQPAATALANTIEVFRSNGLTANESGRLIDFLKDVMESMDKGEMEITTHFQRKRRVRDNMTKKMVTQRTIGKKKQRLNKRSYLIRALTLNTMTKDAERGKLKRRAIATPGMQIRGFVYFVETLARSICEKLEQSGLPVGGNEKKAKLANVVRKMMTNSQDTELSFTITGDNTKWNENQNPRMFLAMITYITRKQPEWFRNVLSIAPIMFSNKMARLGKGYMFESKSMKLRTQIPAEMLASIDLKYFNESTRKKIEKIRPLLIDGTASLSPGMMMGMFNMLSTVLGVSILNLGQKRYTKTTYWWDGLQSSDDFALIVNAPNHEGIQAGVDRFYRTCKLVGINMSKKKSYINRTGTFEFTSFFYRYGFVANFSMELPSFGVSGINESADMSIGVTVIKNNMINNDLGPATAQMALQLFIKDYRYTYRCHRGDTQIQTGRSFELKKLWEQTRSKAGLLVSDGGPNLYNIRNLHIPEVCLKWELMDEDYQGRLCNPLNPFVSHKEIESVNNAVVMPAHGPAKSMEYDAVATTHSWVPKRNRSILNTSQRGILEDEQMYQKCCNLFEKFFPSSSYRRPVGISSMVEAMVSRARIDARIDFESGRIKKEEFAEIMKICSTIEELRRQK.

Residues 50–82 (SEKGKWTTNTETGAPQLNPIDGPLPEDNEPSGY) form a disordered region. The span at 55-64 (WTTNTETGAP) shows a compositional bias: polar residues. Short sequence motifs (nuclear localization signal) lie at residues 187 to 195 (RKRRVRDNM) and 203 to 216 (RTIG…NKRS). The promoter-binding site stretch occupies residues 249-256 (RGFVYFVE). The 198-residue stretch at 286–483 (VRKMMTNSQD…GINMSKKKSY (198 aa)) folds into the RdRp catalytic domain.

It belongs to the influenza viruses polymerase PB1 family. As to quaternary structure, influenza RNA polymerase is composed of three subunits: PB1, PB2 and PA. Interacts (via N-terminus) with PA (via C-terminus). Interacts (via C-terminus) with PB2 (via N-terminus); this interaction is essential for transcription initiation. Post-translationally, phosphorylated by host PRKCA.

The protein localises to the host nucleus. It localises to the host cytoplasm. It catalyses the reaction RNA(n) + a ribonucleoside 5'-triphosphate = RNA(n+1) + diphosphate. Its function is as follows. RNA-dependent RNA polymerase which is responsible for replication and transcription of virus RNA segments. The transcription of viral mRNAs occurs by a unique mechanism called cap-snatching. 5' methylated caps of cellular mRNAs are cleaved after 10-13 nucleotides by PA. In turn, these short capped RNAs are used as primers by PB1 for transcription of viral mRNAs. During virus replication, PB1 initiates RNA synthesis and copy vRNA into complementary RNA (cRNA) which in turn serves as a template for the production of more vRNAs. The sequence is that of RNA-directed RNA polymerase catalytic subunit from Influenza A virus (strain A/Chicken/Hong Kong/715.5/2001 H5N1 genotype E).